A 461-amino-acid polypeptide reads, in one-letter code: MLKEYRTVKEVVGPLMLVDQVESVSFDELVEIELHNGEKRRGRVLEINKDKALVQLFEGSAGINIKGAKVKFLGKPLELGVSEDMLGRVFDGLGNPKDGGPKIIADEKRDISGIPINPVARNYPDEFIQTGVSAIDGLNTLVRGQKLPVFSGSGLPHAELAAQIARQAKVLKSDSKFAVVFAAIGTTFEEAQYFIDDFTKTGAIDRAVLFINLANDPAIERIATPRMALTAAEYLAFEKGMHVLVIMTDITNYCEALREVSAARKEVPGRRGYPGYLYTDLSTIYERAGRILGKEGSITQIPILTMPEDDKTHPIPDLTGYITEGQIILSRELYKKGIMPPIDVLPSLSRLKDKGIGKEKTREDHADTMNQLFAAYAQGKQAKELSVILGESALSDTDKLYAKFADAFEEEYVSQGFTTNRTIEETLNLGWKLLTILPKSELKRIRDEYLEKYLNKAEESK.

It belongs to the ATPase alpha/beta chains family.

Functionally, produces ATP from ADP in the presence of a proton gradient across the membrane. The V-type beta chain is a regulatory subunit. This Clostridium botulinum (strain Kyoto / Type A2) protein is V-type ATP synthase beta chain.